The chain runs to 533 residues: Putative replication factor C large subunit (533 aa).

A compositionally biased stretch (polar residues) spans 1 to 11 (MSKTAKNTKTI). A disordered region spans residues 1 to 31 (MSKTAKNTKTIKSVKSVNKDNKPNKDNKDDK). Positions 17-31 (VNKDNKPNKDNKDDK) are enriched in basic and acidic residues.

The protein belongs to the activator 1 large subunit family.

Part of the RFC clamp loader complex which loads the PCNA sliding clamp onto DNA. In Acanthamoeba polyphaga (Amoeba), this protein is Putative replication factor C large subunit.